The following is a 366-amino-acid chain: Phospho-2-dehydro-3-deoxyheptonate aldolase (366 aa).

It belongs to the class-I DAHP synthase family.

It catalyses the reaction D-erythrose 4-phosphate + phosphoenolpyruvate + H2O = 7-phospho-2-dehydro-3-deoxy-D-arabino-heptonate + phosphate. Its pathway is metabolic intermediate biosynthesis; chorismate biosynthesis; chorismate from D-erythrose 4-phosphate and phosphoenolpyruvate: step 1/7. Stereospecific condensation of phosphoenolpyruvate (PEP) and D-erythrose-4-phosphate (E4P) giving rise to 3-deoxy-D-arabino-heptulosonate-7-phosphate (DAHP). This chain is Phospho-2-dehydro-3-deoxyheptonate aldolase (aroG), found in Corynebacterium glutamicum (strain ATCC 13032 / DSM 20300 / JCM 1318 / BCRC 11384 / CCUG 27702 / LMG 3730 / NBRC 12168 / NCIMB 10025 / NRRL B-2784 / 534).